A 178-amino-acid chain; its full sequence is Ribulose bisphosphate carboxylase small subunit, chloroplastic (178 aa).

A chloroplast-targeting transit peptide spans 1-54 (MASISSSVATVSRTAPAQANMVAPFTGLKSNAAFPTTKKANDFSTLPSNGGRVQ).

Belongs to the RuBisCO small chain family. In terms of assembly, heterohexadecamer of 8 large and 8 small subunits.

It localises to the plastid. It is found in the chloroplast. RuBisCO catalyzes two reactions: the carboxylation of D-ribulose 1,5-bisphosphate, the primary event in carbon dioxide fixation, as well as the oxidative fragmentation of the pentose substrate. Both reactions occur simultaneously and in competition at the same active site. Although the small subunit is not catalytic it is essential for maximal activity. The chain is Ribulose bisphosphate carboxylase small subunit, chloroplastic from Helianthus annuus (Common sunflower).